The primary structure comprises 631 residues: Transcription factor dibT (631 aa).

The segment at residues 11–38 is a DNA-binding region (zn(2)-C6 fungal-type); it reads CWTCRLRRKRCDSVQPVCGSCQSLEITC. Positions 123-144 are enriched in low complexity; that stretch reads SLADSSASTPSTSSGRPTTLRS. 2 disordered regions span residues 123–148 and 469–488; these read SLAD…SVDR and GLKD…TSAG.

The protein localises to the nucleus. Functionally, transcription factor; part of the gene cluster that mediates the biosynthesis of pestalotiollide B which is part of dibenzodioxocinones, a novel class of inhibitors against cholesterol ester transfer protein (CEPT). Acts as the key transcription factor within the cluster and positively regulates the expression of the cluster genes and the subsequent production of dibenzodioxocinones such as pestalotiollide B, pestalotiollide C, 1',2'-dehydropenicillide, 3'-methoxy-1',2'-dehydropenicillide and 1',2'-epoxy-3',4'-didehydropenicillide. Required for the expression of most PKS genes outside of the dibenzodioxocinones cluster, (43 out of 48 defined PKS genes), and promotes pigmentation of the mycelium and conidia. The protein is Transcription factor dibT of Pestalotiopsis microspora.